A 259-amino-acid chain; its full sequence is Methionine aminopeptidase (259 aa).

A substrate-binding site is contributed by His-78. 3 residues coordinate a divalent metal cation: Asp-95, Asp-106, and His-169. His-176 provides a ligand contact to substrate. Position 202 (Glu-202) interacts with a divalent metal cation. Trp-220 contacts substrate. Glu-234 lines the a divalent metal cation pocket.

The protein belongs to the peptidase M24A family. Methionine aminopeptidase type 1 subfamily. As to quaternary structure, monomer. The cofactor is Co(2+). Zn(2+) serves as cofactor. Mn(2+) is required as a cofactor. Requires Fe(2+) as cofactor.

It carries out the reaction Release of N-terminal amino acids, preferentially methionine, from peptides and arylamides.. Its function is as follows. Removes the N-terminal methionine from nascent proteins. The N-terminal methionine is often cleaved when the second residue in the primary sequence is small and uncharged (Met-Ala-, Cys, Gly, Pro, Ser, Thr, or Val). Requires deformylation of the N(alpha)-formylated initiator methionine before it can be hydrolyzed. This is Methionine aminopeptidase from Rickettsia prowazekii (strain Madrid E).